Reading from the N-terminus, the 267-residue chain is Tryptophan synthase alpha chain (267 aa).

Catalysis depends on proton acceptor residues Glu-47 and Asp-58.

This sequence belongs to the TrpA family. Tetramer of two alpha and two beta chains.

The enzyme catalyses (1S,2R)-1-C-(indol-3-yl)glycerol 3-phosphate + L-serine = D-glyceraldehyde 3-phosphate + L-tryptophan + H2O. The protein operates within amino-acid biosynthesis; L-tryptophan biosynthesis; L-tryptophan from chorismate: step 5/5. Functionally, the alpha subunit is responsible for the aldol cleavage of indoleglycerol phosphate to indole and glyceraldehyde 3-phosphate. This chain is Tryptophan synthase alpha chain, found in Pelodictyon phaeoclathratiforme (strain DSM 5477 / BU-1).